The following is a 124-amino-acid chain: Non-structural protein 2 (124 aa).

The short motif at 121-124 is the DLNP; interaction with MAP1B element; that stretch reads DLNP.

Belongs to the pneumovirus non-structural protein 2 family. Monomer (instable). Homomultimer. Heteromultimer with NS1. Interacts with host RIGI (via N-terminus); this interaction prevents host signaling pathway involved in interferon production. Interacts with host MAP1B/microtubule-associated protein 1B.

It localises to the host mitochondrion. In terms of biological role, plays a major role in antagonizing the type I IFN-mediated antiviral response. Acts cooperatively with NS1 to repress activation and nuclear translocation of host IFN-regulatory factor IRF3. Interacts with the host cytoplasmic sensor of viral nucleic acids RIGI and prevents the interaction with its downstream partner MAVS. Together with NS2, participates in the proteasomal degradation of host STAT2, IRF3, IRF7, TBK1 and RIGI through a NS-degradasome involving CUL2 and Elongin-C. The degradasome requires an intact mitochondrial MAVS. Induces host SOCS1 expression. Induces activation of NF-kappa-B. Suppresses premature apoptosis by an NF-kappa-B-dependent, interferon-independent mechanism promoting continued viral replication. In Human respiratory syncytial virus B (strain B1), this protein is Non-structural protein 2 (1B).